A 189-amino-acid polypeptide reads, in one-letter code: Glucose-6-phosphate isomerase (189 aa).

Fe cation-binding residues include His88, His90, Glu97, and His136.

Belongs to the archaeal-type GPI family. Homodimer.

It is found in the cytoplasm. It catalyses the reaction alpha-D-glucose 6-phosphate = beta-D-fructose 6-phosphate. It participates in carbohydrate degradation; glycolysis; D-glyceraldehyde 3-phosphate and glycerone phosphate from D-glucose: step 2/4. The protein is Glucose-6-phosphate isomerase of Thermococcus onnurineus (strain NA1).